Here is a 113-residue protein sequence, read N- to C-terminus: MDTVRVAFLLVLVLAVSLGQADKDENRMEMQEKTEQGKSYLDFAENLLLQKLEELEAKLLEEDSEESRNSRQKRCIGEGVPCDENDPRCCSGLVCLKPTLHGIWYKSYYCYKK.

The first 21 residues, 1–21 (MDTVRVAFLLVLVLAVSLGQA), serve as a signal peptide directing secretion. A propeptide spanning residues 22 to 74 (DKDENRMEMQEKTEQGKSYLDFAENLLLQKLEELEAKLLEEDSEESRNSRQKR) is cleaved from the precursor. The segment covering 60 to 69 (LEEDSEESRN) has biased composition (basic and acidic residues). Residues 60 to 83 (LEEDSEESRNSRQKRCIGEGVPCD) are disordered. Cystine bridges form between cysteine 75/cysteine 90, cysteine 82/cysteine 95, and cysteine 89/cysteine 110.

The protein belongs to the neurotoxin 14 (magi-1) family. 01 (HNTX-16) subfamily. As to expression, expressed by the venom gland.

The protein resides in the secreted. Its function is as follows. Probable ion channel inhibitor. This chain is U11-theraphotoxin-Hhn1a, found in Cyriopagopus hainanus (Chinese bird spider).